A 1382-amino-acid chain; its full sequence is DNA-directed RNA polymerase subunit beta'' (1382 aa).

Zn(2+) is bound by residues C224, C294, C301, and C304.

It belongs to the RNA polymerase beta' chain family. RpoC2 subfamily. In plastids the minimal PEP RNA polymerase catalytic core is composed of four subunits: alpha, beta, beta', and beta''. When a (nuclear-encoded) sigma factor is associated with the core the holoenzyme is formed, which can initiate transcription. Zn(2+) is required as a cofactor.

The protein resides in the plastid. It is found in the chloroplast. It carries out the reaction RNA(n) + a ribonucleoside 5'-triphosphate = RNA(n+1) + diphosphate. Functionally, DNA-dependent RNA polymerase catalyzes the transcription of DNA into RNA using the four ribonucleoside triphosphates as substrates. In Liriodendron tulipifera (Tuliptree), this protein is DNA-directed RNA polymerase subunit beta''.